We begin with the raw amino-acid sequence, 139 residues long: Large ribosomal subunit protein uL16c (139 aa).

The span at 1-17 shows a compositional bias: basic residues; that stretch reads MLSPKKTKFRKQHRGRM. Residues 1–23 are disordered; it reads MLSPKKTKFRKQHRGRMKGSASK.

It belongs to the universal ribosomal protein uL16 family. Part of the 50S ribosomal subunit.

Its subcellular location is the plastid. The protein resides in the chloroplast. This chain is Large ribosomal subunit protein uL16c, found in Porphyra purpurea (Red seaweed).